The sequence spans 406 residues: 4-hydroxy-3-methylbut-2-en-1-yl diphosphate synthase (ferredoxin) (406 aa).

Positions 315, 318, 349, and 356 each coordinate [4Fe-4S] cluster.

Belongs to the IspG family. The cofactor is [4Fe-4S] cluster.

The catalysed reaction is (2E)-4-hydroxy-3-methylbut-2-enyl diphosphate + 2 oxidized [2Fe-2S]-[ferredoxin] + H2O = 2-C-methyl-D-erythritol 2,4-cyclic diphosphate + 2 reduced [2Fe-2S]-[ferredoxin] + H(+). The protein operates within isoprenoid biosynthesis; isopentenyl diphosphate biosynthesis via DXP pathway; isopentenyl diphosphate from 1-deoxy-D-xylulose 5-phosphate: step 5/6. Its function is as follows. Converts 2C-methyl-D-erythritol 2,4-cyclodiphosphate (ME-2,4cPP) into 1-hydroxy-2-methyl-2-(E)-butenyl 4-diphosphate. The polypeptide is 4-hydroxy-3-methylbut-2-en-1-yl diphosphate synthase (ferredoxin) (Microcystis aeruginosa (strain NIES-843 / IAM M-2473)).